A 370-amino-acid polypeptide reads, in one-letter code: Platelet-derived growth factor D (370 aa).

An N-terminal signal peptide occupies residues 1–23 (MHRLILVSILVCANFCCYRDTFA). Residues 52-170 (RDENIRVTGT…PGFKIYYSFV (119 aa)) form the CUB domain. Cys-109 and Cys-131 are joined by a disulfide. The N-linked (GlcNAc...) asparagine glycan is linked to Asn-276. Disulfide bonds link Cys-302–Cys-360 and Cys-306–Cys-362.

Belongs to the PDGF/VEGF growth factor family. Homodimer; disulfide-linked. Interacts with PDGFRB homodimers, and with heterodimers formed by PDGFRA and PDGFRB. Post-translationally, activated by proteolytic cleavage. Proteolytic removal of the N-terminal CUB domain releasing the core domain is necessary for unmasking the receptor-binding epitopes of the core domain. Cleavage after Arg-247 or Arg-249 by urokinase plasminogen activator gives rise to the active form. In terms of tissue distribution, widely expressed. Expressed at high levels in the kidney, adrenal glands, eye and CNS. In the kidney the localization is confined to arterial and arteriolar vascular smooth muscle cells and is also detected at low levels in the glomeruli In the eye in the anterior segment it is localized to the iris and ciliary body. In the retina localizes intensely to the outer plexiform layer, which contains photoreceptor axons and the synaptic layer between photoreceptors and second order neurons. In the spinal cord, prominently expressed in the motorneurons.

The protein localises to the secreted. Its function is as follows. Growth factor that plays an essential role in the regulation of embryonic development, cell proliferation, cell migration, survival and chemotaxis. Potent mitogen for cells of mesenchymal origin. Plays an important role in wound healing. Induces macrophage recruitment, increased interstitial pressure, and blood vessel maturation during angiogenesis. May play an important role in control of lens epithelial cell proliferation. Can initiate events that lead to a mesangial proliferative glomerulonephritis, including influx of monocytes and macrophages and production of extracellular matrix. The chain is Platelet-derived growth factor D (Pdgfd) from Rattus norvegicus (Rat).